Consider the following 251-residue polypeptide: Histocompatibility antigen 60b (251 aa).

Residues 1 to 24 (MAKSSLSLNWSLLVLLNFLGATLS) form the signal peptide. The Extracellular segment spans residues 25 to 212 (TGTDSLSCEL…NSDTQGLSFT (188 aa)). N-linked (GlcNAc...) asparagine glycosylation is found at Asn63, Asn93, Asn126, and Asn189. A helical transmembrane segment spans residues 213–233 (WIVIICIGGIVSFMAFMVFAW). The Cytoplasmic segment spans residues 234–251 (CMLKKKKGALCCSSSSTT).

The protein belongs to the NKG2D ligand family. In strain C57BL/6J, strongly expressed in cardiac muscle and skeletal muscle, with lower expression levels in spleen, liver, kidney and thymus. In strain BALB/cJ, weakly expressed in cardiac muscle, spleen, kidney and thymus.

It localises to the cell membrane. Ligand for the KLRK1 immunosurveillance receptor. Binding to KLRK1 stimulates cell lysis in vitro. In Mus musculus (Mouse), this protein is Histocompatibility antigen 60b.